The chain runs to 60 residues: Large ribosomal subunit protein uL30 (60 aa).

It belongs to the universal ribosomal protein uL30 family. Part of the 50S ribosomal subunit.

This is Large ribosomal subunit protein uL30 from Baumannia cicadellinicola subsp. Homalodisca coagulata.